The chain runs to 104 residues: Large ribosomal subunit protein bL28 (104 aa).

The protein belongs to the bacterial ribosomal protein bL28 family.

The polypeptide is Large ribosomal subunit protein bL28 (Wolbachia pipientis wMel).